Consider the following 367-residue polypeptide: 2-oxoisovalerate dehydrogenase subunit alpha (367 aa).

Residues F66, Y95, 128-131 (MPEH), and S144 each bind substrate. 94 to 96 (YYR) lines the thiamine diphosphate pocket. Thiamine diphosphate is bound by residues 144-146 (SPI), 174-180 (GDGATSE), 204-208 (NFYAI), and H273. Mg(2+)-binding residues include D175, N204, and Y206.

This sequence belongs to the BCKDHA family. As to quaternary structure, heterotetramer of two alpha and two beta chains. Directly associated with ODBB in the E1 complex. Thiamine diphosphate is required as a cofactor.

It carries out the reaction N(6)-[(R)-lipoyl]-L-lysyl-[protein] + 3-methyl-2-oxobutanoate + H(+) = N(6)-[(R)-S(8)-2-methylpropanoyldihydrolipoyl]-L-lysyl-[protein] + CO2. Its function is as follows. The branched-chain alpha-keto dehydrogenase complex catalyzes the overall conversion of alpha-keto acids to acyl-CoA and CO(2). It contains multiple copies of three enzymatic components: branched-chain alpha-keto acid decarboxylase (E1), lipoamide acyltransferase (E2) and lipoamide dehydrogenase (E3). This Thermus thermophilus (strain ATCC 27634 / DSM 579 / HB8) protein is 2-oxoisovalerate dehydrogenase subunit alpha.